We begin with the raw amino-acid sequence, 523 residues long: REST corepressor 2 (523 aa).

Positions 1 to 43 (MPSVMEKPSAGSGILSRSRAKTAPNGGQPHSEDDSSEEEHSHD) are disordered. The span at 30 to 43 (HSEDDSSEEEHSHD) shows a compositional bias: basic and acidic residues. Residues S31, S35, S36, and S63 each carry the phosphoserine modification. In terms of domain architecture, ELM2 spans 44-129 (SMIRVGTNYQ…KSLADLANFT (86 aa)). Residue K88 forms a Glycyl lysine isopeptide (Lys-Gly) (interchain with G-Cter in SUMO2) linkage. The 52-residue stretch at 130-181 (PFPDEWTVEDKVLFEQAFGFHGKCFQRIQQMLPDKVIPSLVKYYYSWKKTRS) folds into the SANT 1 domain. The segment at 185–244 (VMDRQARRLGGRKDKEDSDELEEGRGAVSEGEPDTGDPKREPLPSRPLNARPGPGKKEVQ) is disordered. At S202 the chain carries Phosphoserine. Positions 283–314 (TLRGLDSQLISLKRQVQSMKQTNSSLRQALEG) form a coiled coil. In terms of domain architecture, SANT 2 spans 327–378 (KFNSRWTTDEQLLAVQAIRRYGKDFGAIAEVIGNKTLTQVKTFFVSYRRRFN). The segment at 387–523 (EAEQDGAPAA…APLEPPAPSL (137 aa)) is disordered. Positions 432-459 (SVPPAPPPPPPPTSLSQPPPLLRPPLPT) are enriched in pro residues. Residues 460–482 (APTLLRQPPPLQQGRFLQPRLAP) show a composition bias toward low complexity. R479 is modified (asymmetric dimethylarginine). Positions 504-523 (GPQPPPTLVGAPLEPPAPSL) are enriched in pro residues.

The protein belongs to the CoREST family. Predominantly, but not exclusively, expressed in neural tissue. Strongly expressed in neural domains of the developing brain of the developing mouse CNS.

The protein resides in the nucleus. In terms of biological role, may act as a component of a corepressor complex that represses transcription. This chain is REST corepressor 2 (Rcor2), found in Mus musculus (Mouse).